The sequence spans 318 residues: Polyprenal reductase (318 aa).

Residues 1-19 (MAPWAAAQLWALNPLRALW) lie on the Cytoplasmic side of the membrane. Residues 20–40 (LTLAAAFLLTLLLQLVPPGLL) traverse the membrane as a helical segment. Residues 41 to 80 (PGCALFQDLIRYGKTKREGQSRPAVCRVFDVPKRYFSHFY) are Lumenal-facing. Residues 81 to 101 (IISALWNGFLLWHLTQSVFLG) form a helical membrane-spanning segment. Residues 102 to 119 (VPFPNWLHGLLRILGASQ) lie on the Cytoplasmic side of the membrane. A helical transmembrane segment spans residues 120–140 (FQGGELALSAFLVLVFLWLHS). Residues 141 to 156 (LRRLFECFYVSVFSNT) are Lumenal-facing. A helical membrane pass occupies residues 157–177 (VIHIVQYCFGLVYYVLTGLTV). Residues 178 to 194 (LSQVPMDGRNAYVIGKN) are Cytoplasmic-facing. The chain crosses the membrane as a helical span at residues 195–215 (LLMQARWFHILGMLMFIWSSV). The Lumenal segment spans residues 216-265 (HQYKCHVILGNLRKNKAGVVIHCNHRIPFGDWFEYVSSPNYLAELMIYIS). A helical transmembrane segment spans residues 266 to 286 (MAVTFGFHNLTWWLVVTYVFF). The Cytoplasmic portion of the chain corresponds to 287 to 318 (SQALSAFLSHKFYKSKFVSYPKHRKAFLPFLF).

The protein belongs to the steroid 5-alpha reductase family. Polyprenal reductase subfamily.

Its subcellular location is the endoplasmic reticulum membrane. It carries out the reaction a di-trans,poly-cis-dolichal + NADP(+) = a di-trans,poly-cis-polyprenal + NADPH + H(+). The enzyme catalyses a 3-oxo-5alpha-steroid + NADP(+) = a 3-oxo-Delta(4)-steroid + NADPH + H(+). It catalyses the reaction androst-4-ene-3,17-dione + NADPH + H(+) = 5alpha-androstan-3,17-dione + NADP(+). The catalysed reaction is 17beta-hydroxy-5alpha-androstan-3-one + NADP(+) = testosterone + NADPH + H(+). It participates in protein modification; protein glycosylation. Its function is as follows. Plays a key role in early steps of protein N-linked glycosylation by being involved in the conversion of polyprenol into dolichol. Acts as a polyprenal reductase that mediates the reduction of polyprenal into dolichal in a NADP-dependent mechanism. Dolichols are required for the synthesis of dolichol-linked monosaccharides and the oligosaccharide precursor used for N-glycosylation. Also able to convert testosterone (T) into 5-alpha-dihydrotestosterone (DHT). The chain is Polyprenal reductase (SRD5A3) from Ailuropoda melanoleuca (Giant panda).